Reading from the N-terminus, the 149-residue chain is Lipoprotein signal peptidase (149 aa).

2 helical membrane-spanning segments follow: residues 53–73 (MPGK…ALVI) and 89–109 (GLIA…GFVI). Residues aspartate 110 and aspartate 124 contribute to the active site. Residues 119 to 139 (VFNLADSAIVCGGILLLILVL) traverse the membrane as a helical segment.

This sequence belongs to the peptidase A8 family.

The protein localises to the cell membrane. It carries out the reaction Release of signal peptides from bacterial membrane prolipoproteins. Hydrolyzes -Xaa-Yaa-Zaa-|-(S,diacylglyceryl)Cys-, in which Xaa is hydrophobic (preferably Leu), and Yaa (Ala or Ser) and Zaa (Gly or Ala) have small, neutral side chains.. Its pathway is protein modification; lipoprotein biosynthesis (signal peptide cleavage). Functionally, this protein specifically catalyzes the removal of signal peptides from prolipoproteins. In Syntrophomonas wolfei subsp. wolfei (strain DSM 2245B / Goettingen), this protein is Lipoprotein signal peptidase.